The primary structure comprises 349 residues: NADH-ubiquinone oxidoreductase chain 2 (349 aa).

10 consecutive transmembrane segments (helical) span residues 3 to 23 (PYVL…TFAS), 25 to 45 (HWLL…PIMA), 66 to 86 (AAAM…EWEI), 98 to 118 (VMLA…LPEV), 149 to 171 (INSS…GGLN), 178 to 197 (ILAY…LQYA), 202 to 219 (LLSL…FLTL), 240 to 260 (LAAL…LSGF), 274 to 294 (GLPL…YFYL), and 319 to 339 (FTLI…LLPL).

The protein belongs to the complex I subunit 2 family.

It localises to the mitochondrion inner membrane. The catalysed reaction is a ubiquinone + NADH + 5 H(+)(in) = a ubiquinol + NAD(+) + 4 H(+)(out). Its function is as follows. Core subunit of the mitochondrial membrane respiratory chain NADH dehydrogenase (Complex I) that is believed to belong to the minimal assembly required for catalysis. Complex I functions in the transfer of electrons from NADH to the respiratory chain. The immediate electron acceptor for the enzyme is believed to be ubiquinone. The polypeptide is NADH-ubiquinone oxidoreductase chain 2 (MT-ND2) (Salmo salar (Atlantic salmon)).